Reading from the N-terminus, the 418-residue chain is NADH-quinone oxidoreductase subunit D (418 aa).

The protein belongs to the complex I 49 kDa subunit family. NDH-1 is composed of 14 different subunits. Subunits NuoB, C, D, E, F, and G constitute the peripheral sector of the complex.

It is found in the cell inner membrane. It catalyses the reaction a quinone + NADH + 5 H(+)(in) = a quinol + NAD(+) + 4 H(+)(out). Functionally, NDH-1 shuttles electrons from NADH, via FMN and iron-sulfur (Fe-S) centers, to quinones in the respiratory chain. The immediate electron acceptor for the enzyme in this species is believed to be ubiquinone. Couples the redox reaction to proton translocation (for every two electrons transferred, four hydrogen ions are translocated across the cytoplasmic membrane), and thus conserves the redox energy in a proton gradient. This chain is NADH-quinone oxidoreductase subunit D, found in Neisseria meningitidis serogroup B (strain ATCC BAA-335 / MC58).